The chain runs to 257 residues: Phosphate import ATP-binding protein PstB (257 aa).

The ABC transporter domain occupies 4–252 (LKLNDVNIYY…PDNKETEDYI (249 aa)). 36–43 (GPSGCGKS) lines the ATP pocket.

Belongs to the ABC transporter superfamily. Phosphate importer (TC 3.A.1.7) family. In terms of assembly, the complex is composed of two ATP-binding proteins (PstB), two transmembrane proteins (PstC and PstA) and a solute-binding protein (PstS).

The protein localises to the cell membrane. The enzyme catalyses phosphate(out) + ATP + H2O = ADP + 2 phosphate(in) + H(+). Its function is as follows. Part of the ABC transporter complex PstSACB involved in phosphate import. Responsible for energy coupling to the transport system. The polypeptide is Phosphate import ATP-binding protein PstB (Corynebacterium efficiens (strain DSM 44549 / YS-314 / AJ 12310 / JCM 11189 / NBRC 100395)).